We begin with the raw amino-acid sequence, 299 residues long: Protease HtpX homolog (299 aa).

2 consecutive transmembrane segments (helical) span residues 19–39 (LFIV…VWYF) and 41–61 (WGLT…WIAY). Position 146 (His146) interacts with Zn(2+). Glu147 is a catalytic residue. His150 is a binding site for Zn(2+). 2 helical membrane passes run 156–176 (ILLM…RDVM) and 198–218 (IILL…VLII). Glu227 contributes to the Zn(2+) binding site.

This sequence belongs to the peptidase M48B family. Requires Zn(2+) as cofactor.

It localises to the cell membrane. In Thermoanaerobacter pseudethanolicus (strain ATCC 33223 / 39E) (Clostridium thermohydrosulfuricum), this protein is Protease HtpX homolog.